The sequence spans 320 residues: Ciliary microtubule inner protein 2A (320 aa).

This sequence belongs to the CIMIP2 family. In terms of assembly, microtubule inner protein component of sperm flagellar doublet microtubules. As to expression, expressed in sperm.

The protein resides in the cytoplasm. The protein localises to the cytoskeleton. Its subcellular location is the flagellum axoneme. In terms of biological role, microtubule inner protein (MIP) part of the dynein-decorated doublet microtubules (DMTs) in flagellum axoneme. Binds to the intra-tubulin interfaces. The polypeptide is Ciliary microtubule inner protein 2A (CIMIP2A) (Bos taurus (Bovine)).